Here is a 559-residue protein sequence, read N- to C-terminus: Intestinal-type alkaline phosphatase (559 aa).

Residues Met-1–Ser-19 form the signal peptide. Residue Asp-61 participates in Mg(2+) binding. Asp-61 and Ser-111 together coordinate Zn(2+). The Phosphoserine intermediate role is filled by Ser-111. A disulfide bridge links Cys-140 with Cys-202. A glycan (N-linked (GlcNAc...) asparagine) is linked at Asn-141. A Mg(2+)-binding site is contributed by Ser-174. Residue Glu-235 coordinates Ca(2+). A glycan (N-linked (GlcNAc...) asparagine) is linked at Asn-241. 3 residues coordinate Ca(2+): Phe-288, Glu-289, and Asp-304. Residue Glu-330 participates in Mg(2+) binding. The Zn(2+) site is built by Asp-335, His-339, Asp-376, and His-377. Residue Asn-426 is glycosylated (N-linked (GlcNAc...) asparagine). Position 450 (His-450) interacts with Zn(2+). A disulfide bridge links Cys-485 with Cys-492. The segment at Pro-496–Arg-531 is disordered. Low complexity predominate over residues Thr-503–Thr-524. The GPI-anchor amidated asparagine moiety is linked to residue Asn-528. The propeptide at Ser-529–Ser-559 is removed in mature form.

Belongs to the alkaline phosphatase family. In terms of assembly, homodimer. Mg(2+) serves as cofactor. It depends on Zn(2+) as a cofactor. Requires Ca(2+) as cofactor. As to expression, intestine and thymus.

Its subcellular location is the cell membrane. It catalyses the reaction a phosphate monoester + H2O = an alcohol + phosphate. Alkaline phosphatase that can hydrolyze various phosphate compounds. The polypeptide is Intestinal-type alkaline phosphatase (Iap) (Mus musculus (Mouse)).